The sequence spans 225 residues: Uridylate kinase (225 aa).

Gly9–Ser10 serves as a coordination point for ATP. Residue Gly46 coordinates UMP. Residues Gly47 and Arg51 each coordinate ATP. UMP-binding positions include Asp67 and Thr115–Thr121. ATP contacts are provided by Thr141, Asn142, Tyr147, and Asp150.

Belongs to the UMP kinase family. Homohexamer.

The protein resides in the cytoplasm. The catalysed reaction is UMP + ATP = UDP + ADP. It functions in the pathway pyrimidine metabolism; CTP biosynthesis via de novo pathway; UDP from UMP (UMPK route): step 1/1. Its activity is regulated as follows. Inhibited by UTP. Its function is as follows. Catalyzes the reversible phosphorylation of UMP to UDP. The sequence is that of Uridylate kinase from Methanococcus maripaludis (strain DSM 14266 / JCM 13030 / NBRC 101832 / S2 / LL).